We begin with the raw amino-acid sequence, 346 residues long: Lipase chaperone (346 aa).

The chain crosses the membrane as a helical span at residues 10-30; it reads TIVFGVITSVLLLLLLIYYVF.

The protein belongs to the lipase chaperone family.

It is found in the cell inner membrane. In terms of biological role, may be involved in the folding of the extracellular lipase during its passage through the periplasm. This Acinetobacter venetianus (strain ATCC 31012 / DSM 23050 / BCRC 14357 / CCUG 45561 / CIP 110063 / KCTC 2702 / LMG 19082 / RAG-1) protein is Lipase chaperone (lifO).